The primary structure comprises 308 residues: Urease subunit beta (308 aa).

In terms of domain architecture, Urease spans 131-308 (GGIDTHIHFI…STNPTIPFTK (178 aa)). The Ni(2+) site is built by H136, H138, K219, H248, and H274. At K219 the chain carries N6-carboxylysine.

Belongs to the metallo-dependent hydrolases superfamily. Urease alpha subunit family. In terms of assembly, heterohexamer of 3 UreA (alpha) and 3 UreB (beta) subunits. Ni cation is required as a cofactor. In terms of processing, carboxylation allows a single lysine to coordinate two nickel ions.

It localises to the cytoplasm. The enzyme catalyses urea + 2 H2O + H(+) = hydrogencarbonate + 2 NH4(+). Its pathway is nitrogen metabolism; urea degradation; CO(2) and NH(3) from urea (urease route): step 1/1. This chain is Urease subunit beta (ureB), found in Helicobacter mustelae.